The sequence spans 255 residues: Lipoprotein-releasing system ATP-binding protein LolD 2 (255 aa).

An ABC transporter domain is found at 9–254; it reads LEARGIRKSY…SDSAKLETVA (246 aa). 45–52 is an ATP binding site; that stretch reads GRSGSGKS.

It belongs to the ABC transporter superfamily. Lipoprotein translocase (TC 3.A.1.125) family. The complex is composed of two ATP-binding proteins (LolD) and two transmembrane proteins (LolC and LolE).

It is found in the cell inner membrane. Its function is as follows. Part of the ABC transporter complex LolCDE involved in the translocation of mature outer membrane-directed lipoproteins, from the inner membrane to the periplasmic chaperone, LolA. Responsible for the formation of the LolA-lipoprotein complex in an ATP-dependent manner. This Rhodopirellula baltica (strain DSM 10527 / NCIMB 13988 / SH1) protein is Lipoprotein-releasing system ATP-binding protein LolD 2.